The primary structure comprises 102 residues: Integration host factor subunit alpha (102 aa).

Positions Phe49–Ile71 are disordered.

It belongs to the bacterial histone-like protein family. As to quaternary structure, heterodimer of an alpha and a beta chain.

In terms of biological role, this protein is one of the two subunits of integration host factor, a specific DNA-binding protein that functions in genetic recombination as well as in transcriptional and translational control. This chain is Integration host factor subunit alpha, found in Nitrosomonas eutropha (strain DSM 101675 / C91 / Nm57).